The following is a 928-amino-acid chain: Diacylglycerol kinase zeta (928 aa).

Positions 1 to 14 (MEPRDGSPEARSSD) are enriched in basic and acidic residues. Disordered regions lie at residues 1 to 46 (MEPR…RRFP) and 59 to 82 (KSGLQHLAPPPPTPGAPCSESERQ). Positions 15–24 (SESASASSSG) are enriched in low complexity. Residues 25 to 37 (SERDAGPEPDKAP) show a composition bias toward basic and acidic residues. 2 consecutive Phorbol-ester/DAG-type zinc fingers follow at residues 98–152 (HIWF…NFRC) and 172–230 (HHWV…EEPC). A disordered region spans residues 251-280 (PQNTLKASKKKKRASFKRKSSKKGPEEGRW). Over residues 257-272 (ASKKKKRASFKRKSSK) the composition is skewed to basic residues. The MARCKS homology stretch occupies residues 259–273 (KKKKRASFKRKSSKK). The interval 278 to 416 (GRWRPFIIRP…HVEEGNVVQL (139 aa)) is mediates interaction with RASGRP1. The 135-residue stretch at 291–425 (PLMKPLLVFV…LDRWDLHAEP (135 aa)) folds into the DAGKc domain. The short motif at 361–369 (LSTLDQLRL) is the Nuclear export signal element. At serine 705 the chain carries Phosphoserine. Positions 759-788 (ARPDLPTPTSPLPTSPCSPTPRSLQGDAAP) are disordered. Pro residues predominate over residues 763-777 (LPTPTSPLPTSPCSP). Serine 781 bears the Phosphoserine mark. 2 ANK repeats span residues 822–852 (QSRTLLHHAVSTGSKDVVRYLLDHAPPEILD) and 857–886 (NGETCLHQAAALGQRTICHYIVEAGASLMK). A PDZ-binding motif is present at residues 924-928 (QETAV).

It belongs to the eukaryotic diacylglycerol kinase family. As to quaternary structure, interacts (via PDZ-binding motif) with the PDZ domain of the syntrophin SNTG1 and that of SNX27. Interacts with IRS1 in the absence of insulin; insulin stimulation decreases this interaction. Found in a ternary complex with IRS1 and PIP5K1A in the absence of insulin. Interacts with PIP5K1A. In terms of assembly, forms a signaling complex with RASGRP1 and HRAS. Phosphorylation of the MARCKS homology domain by PKC reduces nuclear accumulation of DGK-zeta. In terms of tissue distribution, highest levels in brain, and substantial levels in skeletal muscle, heart, and pancreas. Predominantly expressed in muscle.

It localises to the nucleus. It is found in the cytoplasm. Its subcellular location is the cytosol. The protein resides in the cell membrane. The protein localises to the cell projection. It localises to the lamellipodium. The catalysed reaction is a 1,2-diacyl-sn-glycerol + ATP = a 1,2-diacyl-sn-glycero-3-phosphate + ADP + H(+). The enzyme catalyses a 1-O-alkyl-sn-glycerol + ATP = a 1-O-alkyl-sn-glycero-3-phosphate + ADP + H(+). It catalyses the reaction 1-O-alkyl-2-acyl-sn-glycerol + ATP = 1-O-alkyl-2-acyl-sn-glycero-3-phosphate + ADP + H(+). It carries out the reaction 1,2-didecanoyl-sn-glycerol + ATP = 1,2-didecanoyl-sn-glycero-3-phosphate + ADP + H(+). The catalysed reaction is 1,2-ditetradecanoyl-sn-glycerol + ATP = 1,2-ditetradecanoyl-sn-glycero-3-phosphate + ADP + H(+). The enzyme catalyses 1-hexadecanoyl-2-(9Z-octadecenoyl)-sn-glycerol + ATP = 1-hexadecanoyl-2-(9Z-octadecenoyl)-sn-glycero-3-phosphate + ADP + H(+). It catalyses the reaction 1-hexadecanoyl-2-(5Z,8Z,11Z,14Z-eicosatetraenoyl)-sn-glycerol + ATP = 1-hexadecanoyl-2-(5Z,8Z,11Z,14Z-eicosatetraenoyl)-sn-glycero-3-phosphate + ADP + H(+). It carries out the reaction 1-octadecanoyl-2-(9Z-octadecenoyl)-sn-glycerol + ATP = 1-octadecanoyl-2-(9Z-octadecenoyl)-sn-glycero-3-phosphate + ADP + H(+). The catalysed reaction is 1-octadecanoyl-2-(5Z,8Z,11Z,14Z-eicosatetraenoyl)-sn-glycerol + ATP = 1-octadecanoyl-2-(5Z,8Z,11Z,14Z-eicosatetraenoyl)-sn-glycero-3-phosphate + ADP + H(+). The enzyme catalyses 1-octadecanoyl-2-(4Z,7Z,10Z,13Z,16Z,19Z-docosahexaenoyl)-sn-glycerol + ATP = 1-octadecanoyl-2-(4Z,7Z,10Z,13Z,16Z,19Z-docosahexaenoyl)-sn-glycero-3-phosphate + ADP + H(+). It catalyses the reaction 1,2-di-(9Z-octadecenoyl)-sn-glycerol + ATP = 1,2-di-(9Z-octadecenoyl)-sn-glycero-3-phosphate + ADP + H(+). It carries out the reaction 1-(9Z-octadecenoyl)-2-hexadecanoyl-sn-glycerol + ATP = 1-(9Z)-octadecenoyl-2-hexadecanoyl-sn-glycero-3-phosphate + ADP + H(+). The catalysed reaction is 1-eicosanoyl-2-(5Z,8Z,11Z,14Z)-eicosatetraenoyl-sn-glycerol + ATP = 1-eicosanoyl-2-(5Z,8Z,11Z,14Z)-eicosatetraenoyl-sn-glycero-3-phosphate + ADP + H(+). The enzyme catalyses 1,2-di-(5Z,8Z,11Z,14Z)-eicosatetraenoyl-sn-glycerol + ATP = 1,2-di-(5Z,8Z,11Z,14Z)-eicosatetraenoyl-sn-glycero-3-phosphate + ADP + H(+). It catalyses the reaction 1-O-hexadecyl-2-acetyl-sn-glycerol + ATP = 1-O-hexadecyl-2-acetyl-sn-glycero-3-phosphate + ADP + H(+). It carries out the reaction 1-O-hexadecyl-2-(5Z,8Z,11Z,14Z-eicosatetraenoyl)-sn-glycerol + ATP = 1-O-hexadecyl-2-(5Z,8Z,11Z,14Z-eicosatetraenoyl)-sn-glycero-3-phosphate + ADP + H(+). The catalysed reaction is 1-O-hexadecyl-2-(9Z-octadecenoyl)-sn-glycerol + ATP = 1-O-hexadecyl-2-(9Z-octadecenoyl)-sn-glycero-3-phosphate + ADP + H(+). The enzyme catalyses 1-O-hexadecyl-sn-glycerol + ATP = 1-O-hexadecyl-sn-glycero-3-phosphate + ADP + H(+). It participates in lipid metabolism; glycerolipid metabolism. With respect to regulation, activated by 1,2-diacyl-sn-glycero-3-phosphate/phosphatidic acid irrespective of its acyl chain composition. Functionally, diacylglycerol kinase that converts diacylglycerol/DAG into phosphatidic acid/phosphatidate/PA and regulates the respective levels of these two bioactive lipids. Thereby, acts as a central switch between the signaling pathways activated by these second messengers with different cellular targets and opposite effects in numerous biological processes. Also plays an important role in the biosynthesis of complex lipids. Does not exhibit an acyl chain-dependent substrate specificity among diacylglycerol species. Can also phosphorylate 1-alkyl-2-acylglycerol in vitro but less efficiently and with a preference for alkylacylglycerols containing an arachidonoyl group. The biological processes it is involved in include T cell activation since it negatively regulates T-cell receptor signaling which is in part mediated by diacylglycerol. By generating phosphatidic acid, stimulates PIP5KIA activity which regulates actin polymerization. Through the same mechanism could also positively regulate insulin-induced translocation of SLC2A4 to the cell membrane. Its function is as follows. Regulates RASGRP1 activity. Does not regulate RASGRP1 activity. This chain is Diacylglycerol kinase zeta, found in Homo sapiens (Human).